The chain runs to 556 residues: MDGALINSVLYVSPRNGAHYFVELTEKHLLAFEMLNSMCLLENYDHVLLFLECQFGKSHNLAVIPFDIILVLFTLSTLSEYYKEPILRANDPYNTSRETLSRRALKLLQKYLAILKEFDSEQYNLYDLELLRCQFFLAIDTLTPKKQKWGFDRFRRTKSESGVTYRQNASVDPELDQAKTFKNPYRSYISCLEQRNTILGNRLLNLKLNEPGEFINMILWTLSNSLQESTPLFLSSHEIWMPLLEILIDLFSCRQDYFIQHEVAQNVSKSLFVQRLSESPLAVFFESLNTRNFANRFSEYVFLNCDYKLPSDNYATPVHPVYNGENTIVDTYIPTIKCSPLYKSQKSLALRRKLIGSCFKLLLRVPDGHRLITPRIVADDVIQGISRTLASFNDILQFKKFFMTENLSQESYFIPLLAEGTLSEILKDTQECVVILTLVENLSDGVSFCNEVIGLVKSKCFAFTEQCSQASYEEAVLNIEKCDVCLLVLLRYLLHLIGTEAILDAKEQLEMLHAIEKNDSGRRQWAKALNLGNDPPLLYPIVSQMFGVHDKSVIIE.

As to quaternary structure, component of the Smc5-Smc6 complex which consists of KRE29, MMS21, NSE1, NSE3, NSE4, NSE5, SMC5 and SMC6. Interacts with KRE29.

Its subcellular location is the nucleus. It localises to the chromosome. Functionally, acts in a DNA repair pathway for removal of UV-induced DNA damage that is distinct from classical nucleotide excision repair and in repair of ionizing radiation damage. Functions in homologous recombination repair of DNA double strand breaks and in recovery of stalled replication forks. The protein is Non-structural maintenance of chromosome element 5 (NSE5) of Saccharomyces cerevisiae (strain ATCC 204508 / S288c) (Baker's yeast).